A 1389-amino-acid chain; its full sequence is DNA-directed RNA polymerase subunit beta'' (1389 aa).

4 residues coordinate Zn(2+): cysteine 224, cysteine 295, cysteine 302, and cysteine 305.

This sequence belongs to the RNA polymerase beta' chain family. RpoC2 subfamily. As to quaternary structure, in plastids the minimal PEP RNA polymerase catalytic core is composed of four subunits: alpha, beta, beta', and beta''. When a (nuclear-encoded) sigma factor is associated with the core the holoenzyme is formed, which can initiate transcription. It depends on Zn(2+) as a cofactor.

The protein localises to the plastid. It localises to the chloroplast. The catalysed reaction is RNA(n) + a ribonucleoside 5'-triphosphate = RNA(n+1) + diphosphate. In terms of biological role, DNA-dependent RNA polymerase catalyzes the transcription of DNA into RNA using the four ribonucleoside triphosphates as substrates. The chain is DNA-directed RNA polymerase subunit beta'' from Atropa belladonna (Belladonna).